The primary structure comprises 190 residues: dTTP/UTP pyrophosphatase (190 aa).

Asp-69 acts as the Proton acceptor in catalysis.

Belongs to the Maf family. YhdE subfamily. It depends on a divalent metal cation as a cofactor.

The protein resides in the cytoplasm. It carries out the reaction dTTP + H2O = dTMP + diphosphate + H(+). The enzyme catalyses UTP + H2O = UMP + diphosphate + H(+). Functionally, nucleoside triphosphate pyrophosphatase that hydrolyzes dTTP and UTP. May have a dual role in cell division arrest and in preventing the incorporation of modified nucleotides into cellular nucleic acids. The polypeptide is dTTP/UTP pyrophosphatase (Sphingopyxis alaskensis (strain DSM 13593 / LMG 18877 / RB2256) (Sphingomonas alaskensis)).